We begin with the raw amino-acid sequence, 163 residues long: Phosphopantetheine adenylyltransferase (163 aa).

Threonine 11 contacts substrate. ATP is bound by residues 11–12 (TF) and histidine 19. The substrate site is built by lysine 43, leucine 75, and arginine 89. Residues 90–92 (GLR), glutamate 100, and 125–131 (YSFISST) contribute to the ATP site.

This sequence belongs to the bacterial CoaD family. In terms of assembly, homohexamer. The cofactor is Mg(2+).

The protein resides in the cytoplasm. It catalyses the reaction (R)-4'-phosphopantetheine + ATP + H(+) = 3'-dephospho-CoA + diphosphate. Its pathway is cofactor biosynthesis; coenzyme A biosynthesis; CoA from (R)-pantothenate: step 4/5. Functionally, reversibly transfers an adenylyl group from ATP to 4'-phosphopantetheine, yielding dephospho-CoA (dPCoA) and pyrophosphate. This chain is Phosphopantetheine adenylyltransferase, found in Acinetobacter baylyi (strain ATCC 33305 / BD413 / ADP1).